The primary structure comprises 292 residues: Homoserine kinase (292 aa).

84 to 94 (PISRGLGSSSA) serves as a coordination point for ATP.

This sequence belongs to the GHMP kinase family. Homoserine kinase subfamily.

The protein localises to the cytoplasm. It carries out the reaction L-homoserine + ATP = O-phospho-L-homoserine + ADP + H(+). It functions in the pathway amino-acid biosynthesis; L-threonine biosynthesis; L-threonine from L-aspartate: step 4/5. In terms of biological role, catalyzes the ATP-dependent phosphorylation of L-homoserine to L-homoserine phosphate. The chain is Homoserine kinase from Sulfurovum sp. (strain NBC37-1).